Consider the following 529-residue polypeptide: Bifunctional purine biosynthesis protein PurH (529 aa).

The region spanning 1 to 148 (MQQRRPVRRA…KNHKDVAIVV (148 aa)) is the MGS-like domain. Lys287 is subject to N6-acetyllysine.

The protein belongs to the PurH family.

The catalysed reaction is (6R)-10-formyltetrahydrofolate + 5-amino-1-(5-phospho-beta-D-ribosyl)imidazole-4-carboxamide = 5-formamido-1-(5-phospho-D-ribosyl)imidazole-4-carboxamide + (6S)-5,6,7,8-tetrahydrofolate. It carries out the reaction IMP + H2O = 5-formamido-1-(5-phospho-D-ribosyl)imidazole-4-carboxamide. It functions in the pathway purine metabolism; IMP biosynthesis via de novo pathway; 5-formamido-1-(5-phospho-D-ribosyl)imidazole-4-carboxamide from 5-amino-1-(5-phospho-D-ribosyl)imidazole-4-carboxamide (10-formyl THF route): step 1/1. Its pathway is purine metabolism; IMP biosynthesis via de novo pathway; IMP from 5-formamido-1-(5-phospho-D-ribosyl)imidazole-4-carboxamide: step 1/1. This is Bifunctional purine biosynthesis protein PurH from Escherichia coli (strain SMS-3-5 / SECEC).